A 61-amino-acid chain; its full sequence is Large ribosomal subunit protein bL28 (61 aa).

The tract at residues 1–26 is disordered; sequence MAKDFVTGKHTRFGNTRSHALNHSRR.

Belongs to the bacterial ribosomal protein bL28 family.

The polypeptide is Large ribosomal subunit protein bL28 (Pediococcus pentosaceus (strain ATCC 25745 / CCUG 21536 / LMG 10740 / 183-1w)).